A 244-amino-acid polypeptide reads, in one-letter code: tRNA pseudouridine synthase A 2 (244 aa).

Aspartate 52 serves as the catalytic Nucleophile. Tyrosine 110 is a binding site for substrate.

This sequence belongs to the tRNA pseudouridine synthase TruA family. As to quaternary structure, homodimer.

The catalysed reaction is uridine(38/39/40) in tRNA = pseudouridine(38/39/40) in tRNA. Functionally, formation of pseudouridine at positions 38, 39 and 40 in the anticodon stem and loop of transfer RNAs. This Clostridium perfringens (strain 13 / Type A) protein is tRNA pseudouridine synthase A 2.